The chain runs to 388 residues: Processive diacylglycerol beta-glucosyltransferase (388 aa).

Belongs to the glycosyltransferase 28 family. UgtP subfamily.

It is found in the cell membrane. It carries out the reaction a 1,2-diacyl-3-O-(beta-D-glucopyranosyl)-sn-glycerol + UDP-alpha-D-glucose = a 1,2-diacyl-3-O-(beta-D-Glc-(1-&gt;6)-beta-D-Glc)-sn-glycerol + UDP + H(+). The enzyme catalyses a 1,2-diacyl-3-O-(beta-D-Glc-(1-&gt;6)-beta-D-Glc)-sn-glycerol + UDP-alpha-D-glucose = a 1,2-diacyl-3-O-(beta-D-Glc-(1-&gt;6)-beta-D-Glc-(1-&gt;6)-beta-D-Glc)-sn-glycerol + UDP + H(+). It catalyses the reaction a 1,2-diacyl-sn-glycerol + UDP-alpha-D-glucose = a 1,2-diacyl-3-O-(beta-D-glucopyranosyl)-sn-glycerol + UDP + H(+). It functions in the pathway glycolipid metabolism; diglucosyl-diacylglycerol biosynthesis. Its function is as follows. Processive glucosyltransferase involved in the biosynthesis of both the bilayer- and non-bilayer-forming membrane glucolipids. Is able to successively transfer up to three glucosyl residues to diacylglycerol (DAG), thereby catalyzing the formation of beta-monoglucosyl-DAG (3-O-(beta-D-glucopyranosyl)-1,2-diacyl-sn-glycerol), beta-diglucosyl-DAG (3-O-(beta-D-glucopyranosyl-beta-(1-&gt;6)-D-glucopyranosyl)-1,2-diacyl-sn-glycerol) and beta-triglucosyl-DAG (3-O-(beta-D-glucopyranosyl-beta-(1-&gt;6)-D-glucopyranosyl-beta-(1-&gt;6)-D-glucopyranosyl)-1,2-diacyl-sn-glycerol). Beta-diglucosyl-DAG is the predominant glycolipid found in Bacillales and is also used as a membrane anchor for lipoteichoic acid (LTA). The chain is Processive diacylglycerol beta-glucosyltransferase from Bacillus cereus (strain ATCC 10987 / NRS 248).